A 217-amino-acid polypeptide reads, in one-letter code: Leucyl/phenylalanyl-tRNA--protein transferase (217 aa).

The protein belongs to the L/F-transferase family.

Its subcellular location is the cytoplasm. The enzyme catalyses N-terminal L-lysyl-[protein] + L-leucyl-tRNA(Leu) = N-terminal L-leucyl-L-lysyl-[protein] + tRNA(Leu) + H(+). It catalyses the reaction N-terminal L-arginyl-[protein] + L-leucyl-tRNA(Leu) = N-terminal L-leucyl-L-arginyl-[protein] + tRNA(Leu) + H(+). It carries out the reaction L-phenylalanyl-tRNA(Phe) + an N-terminal L-alpha-aminoacyl-[protein] = an N-terminal L-phenylalanyl-L-alpha-aminoacyl-[protein] + tRNA(Phe). In terms of biological role, functions in the N-end rule pathway of protein degradation where it conjugates Leu, Phe and, less efficiently, Met from aminoacyl-tRNAs to the N-termini of proteins containing an N-terminal arginine or lysine. This is Leucyl/phenylalanyl-tRNA--protein transferase from Caulobacter vibrioides (strain ATCC 19089 / CIP 103742 / CB 15) (Caulobacter crescentus).